The sequence spans 262 residues: Hydroxyethylthiazole kinase (262 aa).

Met43 serves as a coordination point for substrate. Arg118 and Thr164 together coordinate ATP. Substrate is bound at residue Ala191.

It belongs to the Thz kinase family. It depends on Mg(2+) as a cofactor.

It catalyses the reaction 5-(2-hydroxyethyl)-4-methylthiazole + ATP = 4-methyl-5-(2-phosphooxyethyl)-thiazole + ADP + H(+). It functions in the pathway cofactor biosynthesis; thiamine diphosphate biosynthesis; 4-methyl-5-(2-phosphoethyl)-thiazole from 5-(2-hydroxyethyl)-4-methylthiazole: step 1/1. Functionally, catalyzes the phosphorylation of the hydroxyl group of 4-methyl-5-beta-hydroxyethylthiazole (THZ). The chain is Hydroxyethylthiazole kinase from Cereibacter sphaeroides (strain ATCC 17023 / DSM 158 / JCM 6121 / CCUG 31486 / LMG 2827 / NBRC 12203 / NCIMB 8253 / ATH 2.4.1.) (Rhodobacter sphaeroides).